Here is a 121-residue protein sequence, read N- to C-terminus: Small ribosomal subunit protein uS13 (121 aa).

Residues 91–121 (HRRGLPVRGQKTKNNARTRKGPVKTVANKKK) form a disordered region.

Belongs to the universal ribosomal protein uS13 family. As to quaternary structure, part of the 30S ribosomal subunit. Forms a loose heterodimer with protein S19. Forms two bridges to the 50S subunit in the 70S ribosome.

In terms of biological role, located at the top of the head of the 30S subunit, it contacts several helices of the 16S rRNA. In the 70S ribosome it contacts the 23S rRNA (bridge B1a) and protein L5 of the 50S subunit (bridge B1b), connecting the 2 subunits; these bridges are implicated in subunit movement. Contacts the tRNAs in the A and P-sites. The sequence is that of Small ribosomal subunit protein uS13 from Staphylococcus aureus (strain Mu3 / ATCC 700698).